A 265-amino-acid chain; its full sequence is Eukaryotic translation initiation factor 3 subunit J (265 aa).

The segment covering 24–34 (AGDEPILDSWD) has biased composition (acidic residues). A disordered region spans residues 24-74 (AGDEPILDSWDEEPKAKKEAAKPKPKPKAGGKKNAKGEEKKEQVLAIDELD). Basic and acidic residues predominate over residues 35 to 45 (EEPKAKKEAAK). Positions 46–57 (PKPKPKAGGKKN) are enriched in basic residues. 2 coiled-coil regions span residues 78–106 (RKEL…MAEE) and 190–220 (IENI…ARVK).

The protein belongs to the eIF-3 subunit J family. As to quaternary structure, component of the eukaryotic translation initiation factor 3 (eIF-3) complex.

It localises to the cytoplasm. Functionally, component of the eukaryotic translation initiation factor 3 (eIF-3) complex, which is involved in protein synthesis of a specialized repertoire of mRNAs and, together with other initiation factors, stimulates binding of mRNA and methionyl-tRNAi to the 40S ribosome. The eIF-3 complex specifically targets and initiates translation of a subset of mRNAs involved in cell proliferation. This is Eukaryotic translation initiation factor 3 subunit J from Candida glabrata (strain ATCC 2001 / BCRC 20586 / JCM 3761 / NBRC 0622 / NRRL Y-65 / CBS 138) (Yeast).